The sequence spans 357 residues: Peptide chain release factor 1 (357 aa).

N5-methylglutamine is present on Q236.

It belongs to the prokaryotic/mitochondrial release factor family. Post-translationally, methylated by PrmC. Methylation increases the termination efficiency of RF1.

The protein localises to the cytoplasm. Functionally, peptide chain release factor 1 directs the termination of translation in response to the peptide chain termination codons UAG and UAA. This chain is Peptide chain release factor 1, found in Mycolicibacterium gilvum (strain PYR-GCK) (Mycobacterium gilvum (strain PYR-GCK)).